The primary structure comprises 141 residues: Stage V sporulation protein AB (141 aa).

The next 4 helical transmembrane spans lie at 7 to 27 (FIIFVGLGGGITVGAGFVAFL), 45 to 65 (FVQAYEAAVILGAVCGGWETL), 75 to 95 (WIAVPVGLLAGLFVGMLAAAL), and 115 to 135 (IIILLMAIVIGKIAGSLFHWL).

Its subcellular location is the cell membrane. This is Stage V sporulation protein AB (spoVAB) from Bacillus subtilis (strain 168).